Consider the following 431-residue polypeptide: STE20-related kinase adapter protein alpha (431 aa).

Residues Ser-2 and Ser-46 each carry the phosphoserine modification. Disordered stretches follow at residues 32–52 (EQPP…SIAS) and 314–344 (PSRS…SHPY). In terms of domain architecture, Protein kinase spans 69 to 379 (YELLTIIGKG…ASTLLNHSFF (311 aa)). Thr-419 carries the phosphothreonine; by LKB1 modification.

The protein belongs to the protein kinase superfamily. STE Ser/Thr protein kinase family. STE20 subfamily. As to quaternary structure, component of a trimeric complex composed of STK11/LKB1, STRAD (STRADA or STRADB) and CAB39/MO25 (CAB39/MO25alpha or CAB39L/MO25beta): the complex tethers STK11/LKB1 in the cytoplasm and stimulates its catalytic activity.

It is found in the nucleus. The protein localises to the cytoplasm. Pseudokinase which, in complex with CAB39/MO25 (CAB39/MO25alpha or CAB39L/MO25beta), binds to and activates STK11/LKB1. Adopts a closed conformation typical of active protein kinases and binds STK11/LKB1 as a pseudosubstrate, promoting conformational change of STK11/LKB1 in an active conformation. The polypeptide is STE20-related kinase adapter protein alpha (Strada) (Mus musculus (Mouse)).